The sequence spans 218 residues: Ras-related protein Rab-4A (218 aa).

Gly23, Thr24, Gly25, Lys26, Ser27, Cys28, Ser42, His44, and Thr45 together coordinate GTP. Ser27 provides a ligand contact to Mg(2+). The Switch 1 motif lies at 44-49 (HTIGVE). Thr45 and Asp68 together coordinate Mg(2+). Positions 70-79 (AGQERFRSVT) match the Switch 2 motif. Gly71 lines the GTP pocket. Residue Gln72 is modified to 5-glutamyl serotonin. Residues Asn126, Lys127, Asp129, Ala157, and Leu158 each coordinate GTP. Position 190 is a phosphoserine (Ser190). Ser204 carries the post-translational modification Phosphoserine; by CDK1. Residues Cys216 and Cys218 are each lipidated (S-geranylgeranyl cysteine). Cys218 carries the post-translational modification Cysteine methyl ester.

The protein belongs to the small GTPase superfamily. Rab family. In terms of assembly, interacts with SGSM1, SGSM2 and SGSM3. Interacts with RAB11FIP1, RABEP1, ZFYVE20 and RUFY1. Interacts (membrane-bound form) with NDRG1; the interaction involves NDRG1 in vesicular recycling of E-cadherin. Interacts (in GTP-bound form) with GRIPAP1 (via N-terminus). Interacts with RABEP1 and RBSN. Does not interact with HPS4. Does not interact with HPS4. Interacts with RABEP2; this interaction may mediate VEGFR2 cell surface expression. It depends on Mg(2+) as a cofactor. In terms of processing, serotonylation of Gln-72 by TGM2 during activation and aggregation of platelets leads to constitutive activation of GTPase activity. Phosphorylated by CDK1 kinase during mitosis. In terms of tissue distribution, expressed in the central nervous system, including cortex, cerebellum, midbrain and spinal cord, and in the kidney, lung, liver and spleen.

Its subcellular location is the membrane. It is found in the cytoplasm. It localises to the early endosome membrane. The protein localises to the recycling endosome membrane. The enzyme catalyses GTP + H2O = GDP + phosphate + H(+). With respect to regulation, regulated by guanine nucleotide exchange factors (GEFs) which promote the exchange of bound GDP for free GTP. Regulated by GTPase activating proteins (GAPs) which increase the GTP hydrolysis activity. Inhibited by GDP dissociation inhibitors (GDIs). In terms of biological role, the small GTPases Rab are key regulators of intracellular membrane trafficking, from the formation of transport vesicles to their fusion with membranes. Rabs cycle between an inactive GDP-bound form and an active GTP-bound form that is able to recruit to membranes different sets of downstream effectors directly responsible for vesicle formation, movement, tethering and fusion. RAB4A is involved in protein transport. Also plays a role in vesicular traffic. Mediates VEGFR2 endosomal trafficking to enhance VEGFR2 signaling. Acts as a regulator of platelet alpha-granule release during activation and aggregation of platelets. The sequence is that of Ras-related protein Rab-4A from Mus musculus (Mouse).